A 644-amino-acid polypeptide reads, in one-letter code: MAPYIMIVEFLCLWSSVSAVNCPFFVFYDAITSLLGFSIIWKPKEKVTIMAEAADFVKNKINNGTYSVANKHKGKSVIWSILCDILKEDETVLDGWLFCRQCQKVLKFLHKNTSNLSRHKCCLTLRRPTELKIVSENDKKVAIEKCTQWVVQDCRPFSAVTGAGFKNLVKFFLQIGAIYGEQVDVDDLLPDPTTLSRKAKSDAEEKRSLISSEIKKAVDSGRASATVDMWTDQYVQRNFLGITFHYEKEFKLCDMILGLKSMNFQKSTAENILMKIKGLFSEFNVENIDNVKFVTDRGANIKKALEGNTRLNCSSHLLSNVLEKSFNEANELKKIVKSCKKIVKYCKKSNLQHTLETTLKSACPTRWNSNYKMMKSILDNWRSVDKILGEADIHVDFNKSSLKVVVDILGDFERIFKKLQTSSSPSICFVLPSISKILELCEPNILDLSAAALLKERILENIRKIWMANLSIWHKAAFFLYPPAAHLQEEDILEIKVFCISQIQVPISYTLSLESTETPRTPETPETPETPETPETPETPETPETPETPESLESPNLFPKKNKTISSENEFFFPKPVTESNSNFNESPLDEIERYIRQRVPLSQNFEVIEWWKNNANLYPQLSKLALKLLSIPASSAELKECFP.

Residues 73–131 (KGKSVIWSILCDILKEDETVLDGWLFCRQCQKVLKFLHKNTSNLSRHKCCLTLRRPTEL) form a BED-type zinc finger. Residues 514-560 (ESTETPRTPETPETPETPETPETPETPETPETPETPESLESPNLFPK) are disordered. Tandem repeats lie at residues 521–523 (TPE), 524–526 (TPE), 527–529 (TPE), 530–532 (TPE), 533–535 (TPE), 536–538 (TPE), 539–541 (TPE), 542–544 (TPE), 545–547 (TPE), and 548–550 (TPE). Positions 521–550 (TPETPETPETPETPETPETPETPETPETPE) are 10 X 3 AA tandem repeats of T-P-E.

Its subcellular location is the nucleus. Its function is as follows. Essential for hobo transposase activity. The protein is Transposable element Hobo transposase (T) of Drosophila melanogaster (Fruit fly).